The sequence spans 366 residues: tRNA/tmRNA (uracil-C(5))-methyltransferase (366 aa).

5 residues coordinate S-adenosyl-L-methionine: Q190, Y218, N223, E239, and D299. C324 serves as the catalytic Nucleophile. E358 (proton acceptor) is an active-site residue.

It belongs to the class I-like SAM-binding methyltransferase superfamily. RNA M5U methyltransferase family. TrmA subfamily.

It catalyses the reaction uridine(54) in tRNA + S-adenosyl-L-methionine = 5-methyluridine(54) in tRNA + S-adenosyl-L-homocysteine + H(+). It carries out the reaction uridine(341) in tmRNA + S-adenosyl-L-methionine = 5-methyluridine(341) in tmRNA + S-adenosyl-L-homocysteine + H(+). Dual-specificity methyltransferase that catalyzes the formation of 5-methyluridine at position 54 (m5U54) in all tRNAs, and that of position 341 (m5U341) in tmRNA (transfer-mRNA). This chain is tRNA/tmRNA (uracil-C(5))-methyltransferase, found in Escherichia coli O81 (strain ED1a).